Here is a 199-residue protein sequence, read N- to C-terminus: Probable GTP-binding protein EngB (199 aa).

The EngB-type G domain occupies 28–199; it reads DLPEIALAGR…DSWDAILEQV (172 aa). GTP contacts are provided by residues 36–43, 63–67, 81–84, 148–151, and 180–182; these read GRSNVGKS, GKTQL, DVPG, TKAD, and FSS. The Mg(2+) site is built by S43 and T65.

Belongs to the TRAFAC class TrmE-Era-EngA-EngB-Septin-like GTPase superfamily. EngB GTPase family. Mg(2+) is required as a cofactor.

In terms of biological role, necessary for normal cell division and for the maintenance of normal septation. In Streptococcus pyogenes serotype M3 (strain SSI-1), this protein is Probable GTP-binding protein EngB.